We begin with the raw amino-acid sequence, 156 residues long: Cytochrome c-type biogenesis protein CcmE 1 (156 aa).

The Cytoplasmic segment spans residues 1–8 (MNATRKQR). A helical; Signal-anchor for type II membrane protein transmembrane segment spans residues 9-29 (LCLVIGVLAAAALAVTLIVFA). The Periplasmic portion of the chain corresponds to 30–156 (LQRNMSYLFT…ATAAPLTTPR (127 aa)). Heme-binding residues include H123 and Y127.

Belongs to the CcmE/CycJ family.

The protein resides in the cell inner membrane. In terms of biological role, heme chaperone required for the biogenesis of c-type cytochromes. Transiently binds heme delivered by CcmC and transfers the heme to apo-cytochromes in a process facilitated by CcmF and CcmH. This is Cytochrome c-type biogenesis protein CcmE 1 from Xanthomonas oryzae pv. oryzae (strain MAFF 311018).